A 287-amino-acid chain; its full sequence is Seed leukoagglutinin (287 aa).

An N-terminal signal peptide occupies residues Met-1–Ser-29. Tyr-74 contributes to the N-acetyl-alpha-neuraminyl-(2-&gt;3)-beta-D-galactosyl-(1-&gt;4)-beta-D-glucose binding site. Asn-90 carries N-linked (GlcNAc...) (paucimannose) asparagine glycosylation. The N-acetyl-alpha-neuraminyl-(2-&gt;3)-beta-D-galactosyl-(1-&gt;4)-beta-D-glucose site is built by Asp-116, Ser-133, and Lys-136. A glycan (N-linked (GlcNAc...) (paucimannose) asparagine) is linked at Asn-142. Mn(2+)-binding residues include Glu-156 and Asp-158. Asp-158, Tyr-160, Asp-166, and Asp-169 together coordinate Ca(2+). N-acetyl-alpha-neuraminyl-(2-&gt;3)-beta-D-galactosyl-(1-&gt;4)-beta-D-glucose is bound by residues Tyr-160 and Asp-166. Mn(2+) is bound by residues Asp-169 and His-174. N-linked (GlcNAc...) (high mannose) asparagine; partial glycosylation occurs at Asn-208. Asn-220 carries N-linked (GlcNAc...) (paucimannose) asparagine; partial glycosylation. Glu-253 contacts N-acetyl-alpha-neuraminyl-(2-&gt;3)-beta-D-galactosyl-(1-&gt;4)-beta-D-glucose. Positions Asn-279–Ala-287 are cleaved as a propeptide — removed in mature form.

The protein belongs to the leguminous lectin family. In terms of assembly, homodimer; disulfide-linked. Dimer of homodimers. In terms of processing, the glycosylation on N-90 is determined to by of the high mannose type in PubMed:26003537, while PubMed:27720757 found a paucimannose at this position. Post-translationally, processed at its C-terminus.

Its function is as follows. Sialic acid-binding lectin recognizing oligosaccharides containing terminal sialic acid linked via alpha-2,3 bond to penultimate galactose residues. Binds the trisaccharide sequence Neu5Ac-alpha-2,3-Gal-beta-1,4-GlcNAc. Binds fetuin when fully glycosylated but not when the high mannose-type glycans are removed, although the secondary structure is virtually unaffected by deglycosylation of the high mannose-type glycans. The lectin activity may depend on the presence of a single GlcNAc attached to N-90. The polypeptide is Seed leukoagglutinin (Maackia amurensis (Amur maackia)).